The sequence spans 335 residues: DNA-directed RNA polymerase subunit alpha (335 aa).

The interval 1 to 233 (MTAVNDFLTP…QQIAVFVDLE (233 aa)) is alpha N-terminal domain (alpha-NTD). The alpha C-terminal domain (alpha-CTD) stretch occupies residues 247–335 (IDPILLRPVD…DDDRLNAKLR (89 aa)).

This sequence belongs to the RNA polymerase alpha chain family. As to quaternary structure, homodimer. The RNAP catalytic core consists of 2 alpha, 1 beta, 1 beta' and 1 omega subunit. When a sigma factor is associated with the core the holoenzyme is formed, which can initiate transcription.

It carries out the reaction RNA(n) + a ribonucleoside 5'-triphosphate = RNA(n+1) + diphosphate. DNA-dependent RNA polymerase catalyzes the transcription of DNA into RNA using the four ribonucleoside triphosphates as substrates. The protein is DNA-directed RNA polymerase subunit alpha of Alcanivorax borkumensis (strain ATCC 700651 / DSM 11573 / NCIMB 13689 / SK2).